The following is a 605-amino-acid chain: Elongation factor 4 (605 aa).

The 183-residue stretch at 11–193 folds into the tr-type G domain; the sequence is KRIRNFSIIA…QIVTRISPPQ (183 aa). Residues 23 to 28 and 140 to 143 contribute to the GTP site; these read DHGKST and NKVD.

It belongs to the TRAFAC class translation factor GTPase superfamily. Classic translation factor GTPase family. LepA subfamily.

Its subcellular location is the cell membrane. It catalyses the reaction GTP + H2O = GDP + phosphate + H(+). Required for accurate and efficient protein synthesis under certain stress conditions. May act as a fidelity factor of the translation reaction, by catalyzing a one-codon backward translocation of tRNAs on improperly translocated ribosomes. Back-translocation proceeds from a post-translocation (POST) complex to a pre-translocation (PRE) complex, thus giving elongation factor G a second chance to translocate the tRNAs correctly. Binds to ribosomes in a GTP-dependent manner. In Onion yellows phytoplasma (strain OY-M), this protein is Elongation factor 4.